A 365-amino-acid chain; its full sequence is RISC-loading complex subunit TARBP2 (365 aa).

Sufficient for interaction with PRKRA regions lie at residues 22 to 105 (MLAA…EPAL), 151 to 233 (SPQQ…DARD), and 286 to 365 (LGAL…AGSK). Residues 30-97 (TPISLLQEYG…AEVALKHLKG (68 aa)) form the DRBM 1 domain. Serine 151 carries the post-translational modification Phosphoserine. DRBM domains lie at 158 to 226 (NPVG…RVHT) and 292 to 360 (ACCS…YLRI). Residues 227–365 (VPLDARDGNE…QYLRIMAGSK (139 aa)) form a sufficient for interaction with DICER1 region.

Belongs to the TARBP2 family. In terms of assembly, self-associates. Component of the RISC loading complex (RLC), or micro-RNA (miRNA) loading complex (miRLC), which is composed of DICER1, AGO2 and TARBP2. Note that the trimeric RLC/miRLC is also referred to as RISC. Interacts with EIF2AK2/PKR and inhibits its protein kinase activity. Interacts with DHX9. Interacts with DICER1 and PRKRA. Interacts with DICER1, AGO2, MOV10, EIF6 and RPL7A (60S ribosome subunit); they form a large RNA-induced silencing complex (RISC). Interacts with IRF7; this interaction prevents IRF7 phosphorylation and activation.

Its subcellular location is the cytoplasm. The protein resides in the perinuclear region. It localises to the nucleus. Its function is as follows. Required for formation of the RNA induced silencing complex (RISC). Component of the RISC loading complex (RLC), also known as the micro-RNA (miRNA) loading complex (miRLC), which is composed of DICER1, AGO2 and TARBP2. Within the RLC/miRLC, DICER1 and TARBP2 are required to process precursor miRNAs (pre-miRNAs) to mature miRNAs and then load them onto AGO2. AGO2 bound to the mature miRNA constitutes the minimal RISC and may subsequently dissociate from DICER1 and TARBP2. May also play a role in the production of short interfering RNAs (siRNAs) from double-stranded RNA (dsRNA) by DICER1. Binds in vitro to the PRM1 3'-UTR. Seems to act as a repressor of translation. For some pre-miRNA substrates, may also alter the choice of cleavage site by DICER1. Negatively regulates IRF7-mediated IFN-beta signaling triggered by viral infection by inhibiting the phosphorylation of IRF7 and promoting its 'Lys'-48-linked ubiquitination and degradation. The chain is RISC-loading complex subunit TARBP2 (Tarbp2) from Mus musculus (Mouse).